Reading from the N-terminus, the 152-residue chain is SsrA-binding protein (152 aa).

The interval 122-152 (KGKKNHDKRETEAARDWQRDKARLMKGDRGD) is disordered. Over residues 128–152 (DKRETEAARDWQRDKARLMKGDRGD) the composition is skewed to basic and acidic residues.

The protein belongs to the SmpB family.

The protein localises to the cytoplasm. Required for rescue of stalled ribosomes mediated by trans-translation. Binds to transfer-messenger RNA (tmRNA), required for stable association of tmRNA with ribosomes. tmRNA and SmpB together mimic tRNA shape, replacing the anticodon stem-loop with SmpB. tmRNA is encoded by the ssrA gene; the 2 termini fold to resemble tRNA(Ala) and it encodes a 'tag peptide', a short internal open reading frame. During trans-translation Ala-aminoacylated tmRNA acts like a tRNA, entering the A-site of stalled ribosomes, displacing the stalled mRNA. The ribosome then switches to translate the ORF on the tmRNA; the nascent peptide is terminated with the 'tag peptide' encoded by the tmRNA and targeted for degradation. The ribosome is freed to recommence translation, which seems to be the essential function of trans-translation. The polypeptide is SsrA-binding protein (Caulobacter sp. (strain K31)).